Here is a 954-residue protein sequence, read N- to C-terminus: Glycine dehydrogenase (decarboxylating) (954 aa).

Lys704 is subject to N6-(pyridoxal phosphate)lysine.

This sequence belongs to the GcvP family. As to quaternary structure, the glycine cleavage system is composed of four proteins: P, T, L and H. Requires pyridoxal 5'-phosphate as cofactor.

The enzyme catalyses N(6)-[(R)-lipoyl]-L-lysyl-[glycine-cleavage complex H protein] + glycine + H(+) = N(6)-[(R)-S(8)-aminomethyldihydrolipoyl]-L-lysyl-[glycine-cleavage complex H protein] + CO2. Its function is as follows. The glycine cleavage system catalyzes the degradation of glycine. The P protein binds the alpha-amino group of glycine through its pyridoxal phosphate cofactor; CO(2) is released and the remaining methylamine moiety is then transferred to the lipoamide cofactor of the H protein. This Rhizobium johnstonii (strain DSM 114642 / LMG 32736 / 3841) (Rhizobium leguminosarum bv. viciae) protein is Glycine dehydrogenase (decarboxylating).